We begin with the raw amino-acid sequence, 1060 residues long: Carbamoyl phosphate synthase large chain (1060 aa).

A carboxyphosphate synthetic domain region spans residues Met1–Glu401. Positions 129, 169, 175, 176, 208, 210, 215, 241, 242, 243, 284, and 298 each coordinate ATP. Positions Lys133–Val327 constitute an ATP-grasp 1 domain. Positions 284, 298, and 300 each coordinate Mg(2+). Residues Gln284, Glu298, and Asn300 each contribute to the Mn(2+) site. The tract at residues Ile402–Ser546 is oligomerization domain. Residues Leu547–Tyr929 form a carbamoyl phosphate synthetic domain region. An ATP-grasp 2 domain is found at Glu671 to Leu861. The ATP site is built by Arg707, Ala746, Leu748, Glu752, Gly777, Val778, His779, Ser780, Gln820, and Glu832. Residues Gln820, Glu832, and Asn834 each coordinate Mg(2+). Residues Gln820, Glu832, and Asn834 each coordinate Mn(2+). Positions Leu930–Asp1060 constitute an MGS-like domain. Residues Leu930–Asp1060 form an allosteric domain region.

This sequence belongs to the CarB family. As to quaternary structure, composed of two chains; the small (or glutamine) chain promotes the hydrolysis of glutamine to ammonia, which is used by the large (or ammonia) chain to synthesize carbamoyl phosphate. Tetramer of heterodimers (alpha,beta)4. The cofactor is Mg(2+). Mn(2+) serves as cofactor.

The catalysed reaction is hydrogencarbonate + L-glutamine + 2 ATP + H2O = carbamoyl phosphate + L-glutamate + 2 ADP + phosphate + 2 H(+). It catalyses the reaction hydrogencarbonate + NH4(+) + 2 ATP = carbamoyl phosphate + 2 ADP + phosphate + 2 H(+). Its pathway is amino-acid biosynthesis; L-arginine biosynthesis; carbamoyl phosphate from bicarbonate: step 1/1. It participates in pyrimidine metabolism; UMP biosynthesis via de novo pathway; (S)-dihydroorotate from bicarbonate: step 1/3. In terms of biological role, large subunit of the glutamine-dependent carbamoyl phosphate synthetase (CPSase). CPSase catalyzes the formation of carbamoyl phosphate from the ammonia moiety of glutamine, carbonate, and phosphate donated by ATP, constituting the first step of 2 biosynthetic pathways, one leading to arginine and/or urea and the other to pyrimidine nucleotides. The large subunit (synthetase) binds the substrates ammonia (free or transferred from glutamine from the small subunit), hydrogencarbonate and ATP and carries out an ATP-coupled ligase reaction, activating hydrogencarbonate by forming carboxy phosphate which reacts with ammonia to form carbamoyl phosphate. This Streptococcus agalactiae serotype Ia (strain ATCC 27591 / A909 / CDC SS700) protein is Carbamoyl phosphate synthase large chain.